The sequence spans 209 residues: uncharacterized protein (209 aa).

Residues Ser-119 and His-160 each act as charge relay system in the active site.

The protein belongs to the peptidase S51 family.

This is an uncharacterized protein from Listeria innocua serovar 6a (strain ATCC BAA-680 / CLIP 11262).